The chain runs to 465 residues: MELRGRRVCVTGLGVSGPPVARALLKHGAHVTVVEGRDDDVNRERARTLRELGATVELGEPTTLPAGTDLVVTSPGWRPDAPVLVAAADAGVEVIGDVELAWRLRPAGQVWLAVTGTNGKTTTVRMLEAMLRADGRRALAVGNVGTPVIDAALADGPDRWDILAVELSSFQLHWSATVQPHAAAIINLAPDHLDWHGGMEPYAAAKAKVYGAGTIRIVNAADPALRELAETHGDPAAPLVGFSLDVPRAGELGLVEDLLVDRAFVANPRTEATELATLADVTPRAPHNVANALAAAALARSIGVAPEAVRTGLRNFQPEPHRIAHVATIDGVDYVDDSKATNAHAAAASLAAYPSVVWIAGGLLKGADVTGLVRQAASRLRGVVLLGADRHQLREALDTHAPHVPVVDVARTDEGAMAEVVAAAARLAQKGDTVLLAPAAASMDMFTNYIERGEAFAREVRALAG.

An ATP-binding site is contributed by 116–122 (GTNGKTT).

It belongs to the MurCDEF family.

Its subcellular location is the cytoplasm. It carries out the reaction UDP-N-acetyl-alpha-D-muramoyl-L-alanine + D-glutamate + ATP = UDP-N-acetyl-alpha-D-muramoyl-L-alanyl-D-glutamate + ADP + phosphate + H(+). It functions in the pathway cell wall biogenesis; peptidoglycan biosynthesis. Its function is as follows. Cell wall formation. Catalyzes the addition of glutamate to the nucleotide precursor UDP-N-acetylmuramoyl-L-alanine (UMA). The sequence is that of UDP-N-acetylmuramoylalanine--D-glutamate ligase from Thermobifida fusca (strain YX).